Consider the following 463-residue polypeptide: 6-phosphofructo-2-kinase/fructose-2,6-bisphosphatase 3 (463 aa).

Residues 1–246 (MPLELTQSRV…VYYLMNIHWQ (246 aa)) are 6-phosphofructo-2-kinase. 42–50 (GLPARGKTY) provides a ligand contact to ATP. Beta-D-fructose 6-phosphate contacts are provided by Arg75 and Arg99. Asp125 is an active-site residue. Beta-D-fructose 6-phosphate-binding residues include Thr127 and Arg133. Cys155 is an active-site residue. 164–169 (NIMEVK) provides a ligand contact to ATP. Positions 169, 191, and 195 each coordinate beta-D-fructose 6-phosphate. Residues 247–463 (PRTIYLCRHG…PNPLMRSNSH (217 aa)) form a fructose-2,6-bisphosphatase region. Arg254 is a binding site for beta-D-fructose 2,6-bisphosphate. His255 acts as the Tele-phosphohistidine intermediate in catalysis. Asn261 and Gly267 together coordinate beta-D-fructose 2,6-bisphosphate. The active-site Proton donor/acceptor is the Glu324. Residue Tyr335 coordinates beta-D-fructose 2,6-bisphosphate. Residue 346–349 (YALA) coordinates ATP. Beta-D-fructose 2,6-bisphosphate contacts are provided by Lys353, Tyr364, and Gln390. Residues 390–394 (QAVCV) and Tyr426 contribute to the ATP site. The interval 444–463 (RERSEDAKKGPNPLMRSNSH) is disordered. Residue Ser462 is modified to Phosphoserine; by AMPK and PKA.

In the C-terminal section; belongs to the phosphoglycerate mutase family. As to quaternary structure, homodimer. Forms a heterodimer with PFKFB2. In terms of processing, phosphorylation by AMPK stimulates activity. As to expression, brain.

It catalyses the reaction beta-D-fructose 2,6-bisphosphate + H2O = beta-D-fructose 6-phosphate + phosphate. It carries out the reaction beta-D-fructose 6-phosphate + ATP = beta-D-fructose 2,6-bisphosphate + ADP + H(+). Functionally, catalyzes both the synthesis and degradation of fructose 2,6-bisphosphate. The sequence is that of 6-phosphofructo-2-kinase/fructose-2,6-bisphosphatase 3 (PFKFB3) from Bos taurus (Bovine).